The sequence spans 552 residues: N-acetylglucosamine-6-sulfatase (552 aa).

The signal sequence occupies residues 1–36; it reads MRLLPLAPGRLRRGSPRHLPSCSPALLLLVLGGCLG. Residues D55, D56, and C91 each coordinate Ca(2+). The Nucleophile role is filled by C91. At C91 the chain carries 3-oxoalanine (Cys). N-linked (GlcNAc...) asparagine glycans are attached at residues N111, N117, N183, N198, N210, N279, and N317. Residues D326 and N327 each contribute to the Ca(2+) site. N-linked (GlcNAc...) asparagine glycosylation is found at N362, N387, N405, N422, N449, and N480. The residue at position 541 (S541) is a Phosphoserine.

This sequence belongs to the sulfatase family. It depends on Ca(2+) as a cofactor. The form A (78 kDa) is processed by internal peptidase cleavage to a 32 kDa N-terminal species (form B) and a 48 kDa C-terminal species. In terms of processing, the conversion to 3-oxoalanine (also known as C-formylglycine, FGly), of a serine or cysteine residue in prokaryotes and of a cysteine residue in eukaryotes, is critical for catalytic activity.

Its subcellular location is the lysosome. It carries out the reaction Hydrolysis of the 6-sulfate groups of the N-acetyl-D-glucosamine 6-sulfate units of heparan sulfate and keratan sulfate.. Its function is as follows. Hydrolyzes 6-sulfate groups in N-acetyl-d-glucosaminide units of heparin sulfate and keratan sulfate. This chain is N-acetylglucosamine-6-sulfatase (GNS), found in Homo sapiens (Human).